Here is a 461-residue protein sequence, read N- to C-terminus: Toxin CfTX-B (461 aa).

Positions Met1–Gly24 are cleaved as a signal peptide. Residues Ile25–Arg31 constitute a propeptide that is removed on maturation.

The protein belongs to the jellyfish toxin family. Type II subfamily. As to quaternary structure, oligomer. Contains 2 disulfide bonds. As to expression, nematocytes.

Its subcellular location is the secreted. The protein localises to the nematocyst. It localises to the target cell membrane. Its function is as follows. The fraction containing this toxin and CfTX-B shows potent hemolytic activity. This fraction causes minor effects on the cardiovascular system of anesthetized rats (at 25 ug/kg), since it has no significant effects on heart rate but produces relatively small increases in mean arterial pressure. This chain is Toxin CfTX-B, found in Chironex fleckeri (Australian box jellyfish).